A 68-amino-acid chain; its full sequence is MRTQLAVLLVALVLLQMIAQSEALWGEIWNTVKGLIGKRGLRNLDDLDDVFDDDLSAADLEFLKQLMR.

The first 23 residues, 1–23, serve as a signal peptide directing secretion; it reads MRTQLAVLLVALVLLQMIAQSEA. I36 carries the isoleucine amide modification. Residues 37–68 constitute a propeptide that is removed on maturation; sequence GKRGLRNLDDLDDVFDDDLSAADLEFLKQLMR.

It belongs to the non-disulfide-bridged peptide (NDBP) superfamily. Short antimicrobial peptide (group 4) family. In terms of tissue distribution, expressed by the venom gland.

The protein localises to the secreted. Its function is as follows. Probable antimicrobial peptide. Shows dose-dependent and time-dependent inactivation of herpes simplex virus type 1 (HSV-1) and dose-dependent inhibition of HSV-1 viral attachment to host cells. Scarcely suppress an established HSV-1 infection due to poor cellular uptake. This chain is Antimicrobial peptide Eval418, found in Euscorpiops validus (Scorpion).